We begin with the raw amino-acid sequence, 378 residues long: Rhodopsin (378 aa).

The Extracellular segment spans residues M1–W53. A glycan (N-linked (GlcNAc...) asparagine) is linked at N24. The helical transmembrane segment at H54–I78 threads the bilayer. The Cytoplasmic segment spans residues F79–N90. A helical membrane pass occupies residues L91–C115. At Y116–Y130 the chain is on the extracellular side. Residues C127 and C204 are joined by a disulfide bond. The helical transmembrane segment at G131 to F150 threads the bilayer. Residues D151–G169 are Cytoplasmic-facing. A helical membrane pass occupies residues A170–N193. Over R194–S217 the chain is Extracellular. Residue N200 is glycosylated (N-linked (GlcNAc...) asparagine). A helical transmembrane segment spans residues Y218–V245. The Cytoplasmic segment spans residues A246 to K280. A helical membrane pass occupies residues V281–I304. At F305–N311 the chain is on the extracellular side. A helical membrane pass occupies residues P312–S336. K323 carries the N6-(retinylidene)lysine modification. Over H337–A378 the chain is Cytoplasmic. Positions G356–A378 are disordered. The span at T362 to E371 shows a compositional bias: low complexity.

It belongs to the G-protein coupled receptor 1 family. Opsin subfamily. Phosphorylated on some or all of the serine and threonine residues present in the C-terminal region.

It localises to the membrane. Its function is as follows. Visual pigments are the light-absorbing molecules that mediate vision. They consist of an apoprotein, opsin, covalently linked to cis-retinal. This chain is Rhodopsin, found in Cataglyphis bombycina (Saharan silver ant).